The primary structure comprises 400 residues: Acetylornithine aminotransferase (400 aa).

Pyridoxal 5'-phosphate contacts are provided by residues Gly113 to Ala114 and Phe139. N(2)-acetyl-L-ornithine is bound at residue Arg142. Asp224–Gln227 serves as a coordination point for pyridoxal 5'-phosphate. The residue at position 253 (Lys253) is an N6-(pyridoxal phosphate)lysine. Ser281 serves as a coordination point for N(2)-acetyl-L-ornithine. Position 282 (Thr282) interacts with pyridoxal 5'-phosphate.

It belongs to the class-III pyridoxal-phosphate-dependent aminotransferase family. ArgD subfamily. In terms of assembly, homodimer. Requires pyridoxal 5'-phosphate as cofactor.

It localises to the cytoplasm. The catalysed reaction is N(2)-acetyl-L-ornithine + 2-oxoglutarate = N-acetyl-L-glutamate 5-semialdehyde + L-glutamate. The protein operates within amino-acid biosynthesis; L-arginine biosynthesis; N(2)-acetyl-L-ornithine from L-glutamate: step 4/4. This chain is Acetylornithine aminotransferase, found in Mycobacterium bovis (strain ATCC BAA-935 / AF2122/97).